Here is a 246-residue protein sequence, read N- to C-terminus: 2-aminoethylphosphonate cytidylyltransferase (246 aa).

Residues Ala-19, Gly-20, Lys-34, Ser-97, Glu-114, and Ala-115 each contribute to the CMP-(2-aminoethyl)phosphonate site. Residues Asp-116 and Asp-145 each contribute to the Mg(2+) site. Asp-145, Lys-161, and Asp-202 together coordinate CMP-(2-aminoethyl)phosphonate. Glu-226 and Asp-228 together coordinate Mg(2+).

It belongs to the LicC/PntC cytidylyltransferase family. Monomer. The cofactor is Mg(2+).

The catalysed reaction is (2-aminoethyl)phosphonate + CTP = CMP-(2-aminoethyl)phosphonate + diphosphate. The protein operates within phosphorus metabolism; phosphonate biosynthesis. In terms of biological role, cytidylyltransferase involved in the biosynthesis of cell-surface phosphonates. Catalyzes the activation of 2-aminoethylphosphonate (AEP) to CMP-2-aminoethylphosphonate (CMP-AEP). Can also use phosphocholine, with much lower efficiency. Exhibits strong activity towards CTP, limited activity towards ATP and no activity with GTP. The sequence is that of 2-aminoethylphosphonate cytidylyltransferase from Lancefieldella rimae (strain ATCC 49626 / DSM 7090 / CCUG 31168 / NBRC 15546 / VPI D140H-11A) (Atopobium rimae).